Here is a 366-residue protein sequence, read N- to C-terminus: Histone-lysine N-methyltransferase SETD7 (366 aa).

MORN repeat units follow at residues 36–58, 59–81, and 106–128; these read FEGN…DGST, LEGY…DGGV, and FKGQ…DGGS. The SET domain maps to 214–336; it reads ERVYVADSLI…AEEELTVAYG (123 aa). Residues 226–228, Asn-296, His-297, and Glu-356 each bind S-adenosyl-L-methionine; that span reads AGE.

It belongs to the class V-like SAM-binding methyltransferase superfamily. Histone-lysine methyltransferase family. SET7 subfamily. Interacts with IPF1/PDX-1.

Its subcellular location is the nucleus. The protein localises to the chromosome. It catalyses the reaction L-lysyl(4)-[histone H3] + S-adenosyl-L-methionine = N(6)-methyl-L-lysyl(4)-[histone H3] + S-adenosyl-L-homocysteine + H(+). The catalysed reaction is L-lysyl-[protein] + S-adenosyl-L-methionine = N(6)-methyl-L-lysyl-[protein] + S-adenosyl-L-homocysteine + H(+). Functionally, histone methyltransferase that specifically monomethylates 'Lys-4' of histone H3. H3 'Lys-4' methylation represents a specific tag for epigenetic transcriptional activation. Plays a central role in the transcriptional activation of genes such as collagenase or insulin. Recruited by IPF1/PDX-1 to the insulin promoter, leading to activate transcription. Also has methyltransferase activity toward non-histone proteins such as CGAS, p53/TP53, TAF10, and possibly TAF7 by recognizing and binding the [KR]-[STA]-K in substrate proteins. Monomethylates 'Lys-189' of TAF10, leading to increase the affinity of TAF10 for RNA polymerase II. Monomethylates 'Lys-372' of p53/TP53, stabilizing p53/TP53 and increasing p53/TP53-mediated transcriptional activation. Monomethylates 'Lys-491' of CGAS, promoting interaction between SGF29 and CGAS. The polypeptide is Histone-lysine N-methyltransferase SETD7 (Setd7) (Mus musculus (Mouse)).